Reading from the N-terminus, the 533-residue chain is Purine-cytosine permease FCY2 (533 aa).

Residues 1–98 lie on the Cytoplasmic side of the membrane; sequence MLEEGNNVYE…NAASMWFSAN (98 aa). Lysine 16 participates in a covalent cross-link: Glycyl lysine isopeptide (Lys-Gly) (interchain with G-Cter in ubiquitin). At serine 18 the chain carries Phosphoserine. A helical membrane pass occupies residues 99-119; that stretch reads MVIASYALGALGPMVFGLNFG. Residues 120–121 are Extracellular-facing; it reads QS. Residues 122-141 traverse the membrane as a helical segment; sequence VLVIIFFNIMGLIFVAFFSV. Over 142–198 the chain is Cytoplasmic; sequence FGAELGLRQMILSRYLVGNVTARIFSLINVIACVGWGIVNTSVSAQLLNMVNEGSGH. The tract at residues 165–184 is surface seeking; the sequence is IFSLINVIACVGWGIVNTSV. A helical membrane pass occupies residues 199-218; it reads VCPIWAGCLIIIGGTVLVTF. Residues 219-256 are Extracellular-facing; sequence FGYSVIHAYEKWSWVPNFAVFLVIIAQLSRSGKFKGGE. The helical transmembrane segment at 257–276 threads the bilayer; the sequence is WVGGATTAGSVLSFGSSIFG. At 277–300 the chain is on the cytoplasmic side; it reads FAAGWTTYAADYTVYMPKSTNKYK. Residues 301-320 form a helical membrane-spanning segment; it reads IFFSLVAGLAFPLFFTMILG. The Extracellular segment spans residues 321–347; it reads AASAMAALNDPTWKAYYDKNAMGGVIY. A helical membrane pass occupies residues 348–367; the sequence is AILVPNSLNGFGQFCCVLLA. Residues 368-398 are Cytoplasmic-facing; that stretch reads LSTIANNIPNMYTVALSAQALWAPLAKIPRV. Residues 399–418 form a helical membrane-spanning segment; sequence VWTMAGNAATLGISIPATYY. Residues 419 to 465 lie on the Extracellular side of the membrane; sequence FDGFMENFMDSIGYYLAIYIAISCSEHFFYRRSFSAYNIDDWDNWEH. The chain crosses the membrane as a helical span at residues 466 to 485; that stretch reads LPIGIAGTAALIVGAFGVAL. Residues 486 to 533 are Cytoplasmic-facing; it reads GMCQTYWVGEIGRLIGKYGGDIGFELGASWAFIIYNILRPLELKYFGR.

The protein belongs to the purine-cytosine permease (2.A.39) family. In terms of processing, not N-glycosylated.

It is found in the membrane. Functionally, this permease has a broad specificity towards purines, and also transport cytosine and 5-methylcytosine but neither uracil nor thymine. This chain is Purine-cytosine permease FCY2 (FCY2), found in Saccharomyces cerevisiae (strain ATCC 204508 / S288c) (Baker's yeast).